The sequence spans 2602 residues: Filamin-B (2602 aa).

An actin-binding region spans residues 1-239; sequence MPVTEKDLAE…VMTYLSQFPK (239 aa). Calponin-homology (CH) domains are found at residues 16–122 and 139–242; these read KIQQ…LHYS and QTPK…KAKL. T216 is subject to Phosphothreonine. Residues 244 to 267 are disordered; the sequence is PGAPLKPKLNPKKARAYGRGIEPT. Filamin repeat units lie at residues 249–347, 349–446, 447–543, 544–636, 640–736, 737–839, 840–938, 939–1034, 1035–1127, 1128–1222, 1223–1322, 1323–1415, 1416–1511, 1512–1608, and 1609–1704; these read KPKL…EVSV, KAQG…VVQV, GEAC…EVQV, GPEA…MAFI, TGGY…RVNI, GQGS…RVKV, DPSH…TVGV, AAPL…TVEA, SLPP…KADI, EMPF…RVKV, EPAV…KVAV, TEGC…RVPV, KDVV…KVKV, LPTY…RIRA, and TQTG…TVMA. The residue at position 519 (T519) is a Phosphothreonine. Position 681 is an N6-acetyllysine (K681). S730 bears the Phosphoserine mark. Phosphoserine is present on residues S886, S932, S983, and S1028. An interaction with FBLP1 region spans residues 1128-1511; the sequence is EMPFDPSKVV…IPRSPFKVKV (384 aa). At T1307 the chain carries Phosphothreonine. S1316 bears the Phosphoserine mark. Residues S1433, N1474, S1505, and S1602 each carry the phosphoserine modification. The interval 1705–1728 is hinge 1; sequence TDGEVTAVEEAPVNACPPGFRPWV. 8 Filamin repeats span residues 1729–1813, 1816–1908, 1919–1994, 1997–2089, 2091–2185, 2188–2280, 2282–2375, and 2379–2471; these read TEEA…SPLQ, VNYP…TAKI, KLGS…SIMV, SEIG…TVKI, GEGR…QFTV, LGEG…LVPV, APSD…KVRV, and GQAG…KAKV. K1780 bears the N6-acetyllysine mark. The segment at 1862–2148 is interaction with the cytoplasmic tail of GP1BA; sequence SKAEISCIDN…RVTEAEIVPM (287 aa). Residues 2060-2225 are interaction with FLNA 1; it reads SYFPTVPGVY…IWTREAGAGG (166 aa). S2083, S2107, and S2113 each carry phosphoserine. Residues 2130-2602 form an interaction with INPPL1 region; it reads SAHVTSPSGR…PGSPFHVTVP (473 aa). Phosphoserine is present on residues S2369 and S2465. K2468 participates in a covalent cross-link: Glycyl lysine isopeptide (Lys-Gly) (interchain with G-Cter in ISG15). The hinge 2 stretch occupies residues 2472-2506; sequence TGQRLVSPGSANETSSILVESVTRSSTETCYSAIP. Residues 2472 to 2602 are self-association site, tail; that stretch reads TGQRLVSPGS…PGSPFHVTVP (131 aa). A phosphoserine mark is found at S2478, S2481, and S2492. The Filamin 24 repeat unit spans residues 2507 to 2601; it reads KASSDASKVT…IPGSPFHVTV (95 aa). The interaction with FLNA 2 stretch occupies residues 2507–2602; sequence KASSDASKVT…PGSPFHVTVP (96 aa). An N6-succinyllysine mark is found at K2518 and K2524. K2576 bears the N6-acetyllysine mark.

The protein belongs to the filamin family. Homodimer. Interacts with MICALL2. Interacts with RFLNA and RFLNB. Isoform 1 interacts with FBLP1, FLNA, FLNC, GP1BA, INPPL1, ITGB1A, PSEN1 and PSEN2. Isoform 3 interacts with ITGB1A, ITGB1D, ITGB3 and ITGB6. Interacts with MYOT and MYOZ1. Interacts with HBV capsid protein. Interacts with ASB2 isoform 1; the interaction targets FLNB for proteasomal degradation. Post-translationally, ISGylation prevents ability to interact with the upstream activators of the JNK cascade and inhibits IFNA-induced JNK signaling. In terms of processing, ubiquitination by a SCF-like complex containing ASB2 isoform 1 leads to proteasomal degradation which promotes muscle differentiation. As to expression, ubiquitous. Isoform 1 and isoform 2 are expressed in placenta, bone marrow, brain, umbilical vein endothelial cells (HUVEC), retina and skeletal muscle. Isoform 1 is predominantly expressed in prostate, uterus, liver, thyroid, stomach, lymph node, small intestine, spleen, skeletal muscle, kidney, placenta, pancreas, heart, lung, platelets, endothelial cells, megakaryocytic and erythroleukemic cell lines. Isoform 2 is predominantly expressed in spinal cord, platelet and Daudi cells. Also expressed in thyroid adenoma, neurofibrillary tangles (NFT), senile plaques in the hippocampus and cerebral cortex in Alzheimer disease (AD). Isoform 3 and isoform 6 are expressed predominantly in lung, heart, skeletal muscle, testis, spleen, thymus and leukocytes. Isoform 4 and isoform 5 are expressed in heart.

Its subcellular location is the cytoplasm. It is found in the cell cortex. It localises to the cytoskeleton. The protein resides in the stress fiber. The protein localises to the myofibril. Its subcellular location is the sarcomere. It is found in the z line. Its function is as follows. Connects cell membrane constituents to the actin cytoskeleton. May promote orthogonal branching of actin filaments and links actin filaments to membrane glycoproteins. Anchors various transmembrane proteins to the actin cytoskeleton. Interaction with FLNA may allow neuroblast migration from the ventricular zone into the cortical plate. Various interactions and localizations of isoforms affect myotube morphology and myogenesis. Isoform 6 accelerates muscle differentiation in vitro. This Homo sapiens (Human) protein is Filamin-B (FLNB).